The chain runs to 221 residues: ATP-dependent Clp protease proteolytic subunit 1, mitochondrial (221 aa).

The N-terminal 25 residues, 1 to 25, are a transit peptide targeting the mitochondrion; that stretch reads MLRRLVTSSLSASRSMSASVQSRVG. The Nucleophile role is filled by Ser-120. The active site involves His-145.

It belongs to the peptidase S14 family. In terms of assembly, tetradecamer that assembles into a two heptameric rings with a central cavity. In terms of tissue distribution, expressed in the intestine.

It is found in the mitochondrion matrix. The catalysed reaction is Hydrolysis of proteins to small peptides in the presence of ATP and magnesium. alpha-casein is the usual test substrate. In the absence of ATP, only oligopeptides shorter than five residues are hydrolyzed (such as succinyl-Leu-Tyr-|-NHMec, and Leu-Tyr-Leu-|-Tyr-Trp, in which cleavage of the -Tyr-|-Leu- and -Tyr-|-Trp bonds also occurs).. Functionally, clp cleaves peptides in various proteins in a process that requires ATP hydrolysis. Clp may be responsible for a fairly general and central housekeeping function rather than for the degradation of specific substrates. The chain is ATP-dependent Clp protease proteolytic subunit 1, mitochondrial (clpp-1) from Caenorhabditis elegans.